The chain runs to 225 residues: ATP-dependent Clp protease proteolytic subunit (225 aa).

The Nucleophile role is filled by S123. H148 is an active-site residue.

Belongs to the peptidase S14 family. In terms of assembly, fourteen ClpP subunits assemble into 2 heptameric rings which stack back to back to give a disk-like structure with a central cavity, resembling the structure of eukaryotic proteasomes.

Its subcellular location is the cytoplasm. The catalysed reaction is Hydrolysis of proteins to small peptides in the presence of ATP and magnesium. alpha-casein is the usual test substrate. In the absence of ATP, only oligopeptides shorter than five residues are hydrolyzed (such as succinyl-Leu-Tyr-|-NHMec, and Leu-Tyr-Leu-|-Tyr-Trp, in which cleavage of the -Tyr-|-Leu- and -Tyr-|-Trp bonds also occurs).. Cleaves peptides in various proteins in a process that requires ATP hydrolysis. Has a chymotrypsin-like activity. Plays a major role in the degradation of misfolded proteins. This Chlorobaculum tepidum (strain ATCC 49652 / DSM 12025 / NBRC 103806 / TLS) (Chlorobium tepidum) protein is ATP-dependent Clp protease proteolytic subunit.